The chain runs to 230 residues: Sugar fermentation stimulation protein homolog (230 aa).

The protein belongs to the SfsA family.

This Clostridium perfringens (strain ATCC 13124 / DSM 756 / JCM 1290 / NCIMB 6125 / NCTC 8237 / Type A) protein is Sugar fermentation stimulation protein homolog.